Consider the following 88-residue polypeptide: Small ribosomal subunit protein uS15c (88 aa).

The protein belongs to the universal ribosomal protein uS15 family. In terms of assembly, part of the 30S ribosomal subunit.

It is found in the plastid. The protein resides in the chloroplast. The polypeptide is Small ribosomal subunit protein uS15c (rps15) (Marchantia polymorpha (Common liverwort)).